Consider the following 127-residue polypeptide: Large ribosomal subunit protein bL21 (127 aa).

It belongs to the bacterial ribosomal protein bL21 family. In terms of assembly, part of the 50S ribosomal subunit. Contacts protein L20.

Its function is as follows. This protein binds to 23S rRNA in the presence of protein L20. The polypeptide is Large ribosomal subunit protein bL21 (Synechococcus sp. (strain ATCC 27144 / PCC 6301 / SAUG 1402/1) (Anacystis nidulans)).